The following is a 177-amino-acid chain: ATP synthase subunit delta (177 aa).

This sequence belongs to the ATPase delta chain family. F-type ATPases have 2 components, F(1) - the catalytic core - and F(0) - the membrane proton channel. F(1) has five subunits: alpha(3), beta(3), gamma(1), delta(1), epsilon(1). F(0) has three main subunits: a(1), b(2) and c(10-14). The alpha and beta chains form an alternating ring which encloses part of the gamma chain. F(1) is attached to F(0) by a central stalk formed by the gamma and epsilon chains, while a peripheral stalk is formed by the delta and b chains.

It is found in the cell inner membrane. In terms of biological role, f(1)F(0) ATP synthase produces ATP from ADP in the presence of a proton or sodium gradient. F-type ATPases consist of two structural domains, F(1) containing the extramembraneous catalytic core and F(0) containing the membrane proton channel, linked together by a central stalk and a peripheral stalk. During catalysis, ATP synthesis in the catalytic domain of F(1) is coupled via a rotary mechanism of the central stalk subunits to proton translocation. Functionally, this protein is part of the stalk that links CF(0) to CF(1). It either transmits conformational changes from CF(0) to CF(1) or is implicated in proton conduction. This chain is ATP synthase subunit delta, found in Pectobacterium atrosepticum (strain SCRI 1043 / ATCC BAA-672) (Erwinia carotovora subsp. atroseptica).